A 779-amino-acid chain; its full sequence is Membrane metallo-endopeptidase-like 1 (779 aa).

Topologically, residues 1 to 27 (MGKSEGPVGMVESAGRAGQKRPGFLEG) are cytoplasmic. The helical; Signal-anchor for type II membrane protein transmembrane segment at 28–48 (GLLLLLLLVTAALVALGVLYA) threads the bilayer. Residues 49–779 (DRRGKQLPRL…MHPKERCRVW (731 aa)) are Lumenal-facing. A Peptidase M13 domain is found at 88 to 779 (VCTTPGCVIA…MHPKERCRVW (692 aa)). Disulfide bonds link Cys89/Cys94, Cys112/Cys764, Cys120/Cys724, Cys175/Cys439, and Cys650/Cys776. Arg135 lines the a peptide pocket. N-linked (GlcNAc...) asparagine glycans are attached at residues Asn177, Asn207, Asn350, and Asn530. A coiled-coil region spans residues 515–560 (LEEMNRRLDEEYSNLNFSEDLYFENSLQNLKVGAQRSLRKLREKVD). A Zn(2+)-binding site is contributed by His613. Glu614 is a catalytic residue. Position 617 (His617) interacts with Zn(2+). The N-linked (GlcNAc...) asparagine glycan is linked to Asn657. Residue Glu676 participates in Zn(2+) binding. Asp680 functions as the Proton donor in the catalytic mechanism.

Belongs to the peptidase M13 family. Zn(2+) serves as cofactor. Post-translationally, N-glycosylated. In terms of tissue distribution, predominantly expressed in testis. Weakly expressed in brain, kidney and heart.

The protein resides in the membrane. It is found in the secreted. The catalysed reaction is Preferential cleavage of polypeptides between hydrophobic residues, particularly with Phe or Tyr at P1'.. With respect to regulation, inhibited by thiorphan and phosphoramidon. Its function is as follows. Metalloprotease involved in sperm function, possibly by modulating the processes of fertilization and early embryonic development. Degrades a broad variety of small peptides with a preference for peptides shorter than 3 kDa containing neutral bulky aliphatic or aromatic amino acid residues. Shares the same substrate specificity with MME and cleaves peptides at the same amide bond. The sequence is that of Membrane metallo-endopeptidase-like 1 (MMEL1) from Homo sapiens (Human).